The chain runs to 239 residues: Tumor necrosis factor ligand superfamily member 8 (239 aa).

Residues 1 to 36 form a disordered region; it reads MEPGLQQAGSCGAPSPDPAMQVQPGSVASPWRSTRP. The Cytoplasmic portion of the chain corresponds to 1 to 43; that stretch reads MEPGLQQAGSCGAPSPDPAMQVQPGSVASPWRSTRPWRSTSRS. Residues 44 to 67 form a helical; Signal-anchor for type II membrane protein membrane-spanning segment; the sequence is YFYLSTTALVCLVVAVAIILVLVV. Over 68–239 the chain is Extracellular; sequence QKKDSTPNTT…LSVFLYSSSD (172 aa). N75, N86, N114, N158, N194, and N206 each carry an N-linked (GlcNAc...) asparagine glycan. The region spanning 103 to 230 is the THD domain; the sequence is SWAYLQVSKH…TNTFPLDNVL (128 aa). Cysteines 156 and 182 form a disulfide.

This sequence belongs to the tumor necrosis factor family. In terms of assembly, homotrimer.

The protein resides in the membrane. Its function is as follows. Cytokine that binds to TNFRSF8/CD30. Induces proliferation of T-cells. This chain is Tumor necrosis factor ligand superfamily member 8 (Tnfsf8), found in Mus musculus (Mouse).